The following is a 505-amino-acid chain: MEEFQGHRELYRSWQHNFFYPLIFQEYIYTFAYDRGLNKLILLENVVDQRYSLLTVKRLITRLYHQNHLILSVNDSNQNEIFGHKPKKNLYSQMITEGFAVIVEIPFSLLLISSLDGKEKKIGKSTNLQSIHSIFPFLEDKFLYLNYVLDILIPYPTHLEILVQTLRYWLKDASSLHLLRFFLYECRNWTSRITSKESISFLKKRNRRLFLFLYNFYVCEYEYFFVSLRNQSSYLRSTSFGALLERIHFYGKFKYLVKVKDFAVILWFFKEPFPHYVRYQGKALLASKGTSLLMHKWKYYFIYFWQCYFSVWSQPRRIYINQLSNYSLDFMGFLSNVRFNSSVIRSQMLENSFLLENIRKKFDTIVPISPLVGSLAKAKFCNVLGHPIGKSVWTDLSDSDIIDRFGRICRNLSHYYSGSSRKKNLYRIKYILRLSCARTLSRKHKSTVRAFLKRLGSEFLEEFFTEEEKVLSLILPRDSSTSGGLYRGRVWYLDIICIHNLVNDQ.

This sequence belongs to the intron maturase 2 family. MatK subfamily.

It is found in the plastid. Its subcellular location is the chloroplast. Functionally, usually encoded in the trnK tRNA gene intron. Probably assists in splicing its own and other chloroplast group II introns. The protein is Maturase K of Froelichia floridana (Florida snake-cotton).